The following is a 176-amino-acid chain: Adenine phosphoribosyltransferase (176 aa).

The protein belongs to the purine/pyrimidine phosphoribosyltransferase family. In terms of assembly, homodimer.

It localises to the cytoplasm. The catalysed reaction is AMP + diphosphate = 5-phospho-alpha-D-ribose 1-diphosphate + adenine. The protein operates within purine metabolism; AMP biosynthesis via salvage pathway; AMP from adenine: step 1/1. In terms of biological role, catalyzes a salvage reaction resulting in the formation of AMP, that is energically less costly than de novo synthesis. This chain is Adenine phosphoribosyltransferase, found in Roseobacter denitrificans (strain ATCC 33942 / OCh 114) (Erythrobacter sp. (strain OCh 114)).